The sequence spans 950 residues: Translation initiation factor IF-2 (950 aa).

2 disordered regions span residues 57–254 (LAER…AVVI) and 304–328 (DVSRDKRRGRQPGRPISEEQAKSLS). Low complexity-rich tracts occupy residues 101–131 (AEPQYAEPQAEQAYEPEPQAAQPEAGAEPAA) and 139–169 (AAPLAAQAAPSPGAEAAAPAAPQAQPAQPAA). Residues 170–215 (PAAPPAPTAQPSAPPPAAAQPRPPQPSAPSRPPPPGYRPAPPPGAR) are compositionally biased toward pro residues. A compositionally biased stretch (low complexity) spans 216–233 (PPVSAAPGAPGQPGAAGQ). The 170-residue stretch at 449 to 618 (IRPPVVTVMG…ALQSEVLELK (170 aa)) folds into the tr-type G domain. Residues 458–465 (GHVDHGKT) form a G1 region. 458–465 (GHVDHGKT) is a GTP binding site. A G2 region spans residues 483 to 487 (GITQH). Positions 504–507 (DTPG) are G3. GTP is bound by residues 504 to 508 (DTPGH) and 558 to 561 (NKVD). The G4 stretch occupies residues 558-561 (NKVD). The interval 594-596 (SAR) is G5.

The protein belongs to the TRAFAC class translation factor GTPase superfamily. Classic translation factor GTPase family. IF-2 subfamily.

It localises to the cytoplasm. In terms of biological role, one of the essential components for the initiation of protein synthesis. Protects formylmethionyl-tRNA from spontaneous hydrolysis and promotes its binding to the 30S ribosomal subunits. Also involved in the hydrolysis of GTP during the formation of the 70S ribosomal complex. The polypeptide is Translation initiation factor IF-2 (Anaeromyxobacter dehalogenans (strain 2CP-C)).